Here is a 484-residue protein sequence, read N- to C-terminus: UDP-N-acetylmuramoyl-L-alanyl-D-glutamate--2,6-diaminopimelate ligase (484 aa).

A UDP-N-acetyl-alpha-D-muramoyl-L-alanyl-D-glutamate-binding site is contributed by serine 30. An ATP-binding site is contributed by 111-117 (GTNGKTT). UDP-N-acetyl-alpha-D-muramoyl-L-alanyl-D-glutamate-binding positions include 153–154 (TT), serine 180, glutamine 186, and arginine 188. Lysine 220 bears the N6-carboxylysine mark. Meso-2,6-diaminopimelate is bound by residues arginine 378, 402–405 (DNPR), glycine 455, and glutamate 459. The Meso-diaminopimelate recognition motif signature appears at 402–405 (DNPR).

Belongs to the MurCDEF family. MurE subfamily. It depends on Mg(2+) as a cofactor. Post-translationally, carboxylation is probably crucial for Mg(2+) binding and, consequently, for the gamma-phosphate positioning of ATP.

Its subcellular location is the cytoplasm. It carries out the reaction UDP-N-acetyl-alpha-D-muramoyl-L-alanyl-D-glutamate + meso-2,6-diaminopimelate + ATP = UDP-N-acetyl-alpha-D-muramoyl-L-alanyl-gamma-D-glutamyl-meso-2,6-diaminopimelate + ADP + phosphate + H(+). The protein operates within cell wall biogenesis; peptidoglycan biosynthesis. In terms of biological role, catalyzes the addition of meso-diaminopimelic acid to the nucleotide precursor UDP-N-acetylmuramoyl-L-alanyl-D-glutamate (UMAG) in the biosynthesis of bacterial cell-wall peptidoglycan. The polypeptide is UDP-N-acetylmuramoyl-L-alanyl-D-glutamate--2,6-diaminopimelate ligase (Phocaeicola vulgatus (strain ATCC 8482 / DSM 1447 / JCM 5826 / CCUG 4940 / NBRC 14291 / NCTC 11154) (Bacteroides vulgatus)).